The sequence spans 501 residues: Histidine--tRNA ligase (501 aa).

This sequence belongs to the class-II aminoacyl-tRNA synthetase family. Homodimer.

Its subcellular location is the cytoplasm. The catalysed reaction is tRNA(His) + L-histidine + ATP = L-histidyl-tRNA(His) + AMP + diphosphate + H(+). This Methylocella silvestris (strain DSM 15510 / CIP 108128 / LMG 27833 / NCIMB 13906 / BL2) protein is Histidine--tRNA ligase.